Reading from the N-terminus, the 108-residue chain is Large ribosomal subunit protein eL32 (108 aa).

Over residues arginine 21–methionine 30 the composition is skewed to basic residues. The segment at arginine 21–glycine 44 is disordered.

It belongs to the eukaryotic ribosomal protein eL32 family.

This Methanothermobacter thermautotrophicus (strain ATCC 29096 / DSM 1053 / JCM 10044 / NBRC 100330 / Delta H) (Methanobacterium thermoautotrophicum) protein is Large ribosomal subunit protein eL32 (rpl32e).